A 570-amino-acid polypeptide reads, in one-letter code: Vacuolar protein sorting-associated protein 45 (570 aa).

A phosphoserine mark is found at serine 307 and serine 441.

Belongs to the STXBP/unc-18/SEC1 family. As to quaternary structure, interacts with STX6. Interacts with ZFYVE20. In terms of tissue distribution, ubiquitous. Expression was highest in testis, heart and brain, intermediate in kidney, spleen, prostate, ovary, small intestine and thymus and low in lung, skeletal muscle, placenta, colon, pancreas, peripheral blood leukocytes and liver.

The protein resides in the golgi apparatus membrane. It localises to the endosome membrane. Functionally, may play a role in vesicle-mediated protein trafficking from the Golgi stack through the trans-Golgi network. This Homo sapiens (Human) protein is Vacuolar protein sorting-associated protein 45 (VPS45).